The following is a 321-amino-acid chain: MHIGQFQLTNRLIAAPMAGISDRPFRALCHAMGAGMTVSEMLSSNPEVWRSDKSRLRMVHSDEPGIRAVQIAGCDPDEMAAARRINADSGAQIIDINMGCPAKKVNRKMAGSALLQYPDLVKQILSTVVKAVDVPVTLKIRTGWAPEHRNCVEIAKLAEDCGIQALTIHGRTRACLFNGFAEYDSIRAVKQAVSIPIIANGDITDPHKARAVLDYTGADALMIGRAAQGRPWIFREIQHYLDTGELLAPLPLVEVKRLLIEHIRELHDFYGPGKGFRIARKHVSWYLQEHAPNDQFRRTFNAIEDASEQLEALKAYFENLA.

Residues 16–18 (PMA) and Gln70 each bind FMN. Cys100 serves as the catalytic Proton donor. FMN-binding positions include Lys139, 200–202 (NGD), and 224–225 (GR).

This sequence belongs to the Dus family. DusB subfamily. It depends on FMN as a cofactor.

It carries out the reaction a 5,6-dihydrouridine in tRNA + NAD(+) = a uridine in tRNA + NADH + H(+). The catalysed reaction is a 5,6-dihydrouridine in tRNA + NADP(+) = a uridine in tRNA + NADPH + H(+). Catalyzes the synthesis of 5,6-dihydrouridine (D), a modified base found in the D-loop of most tRNAs, via the reduction of the C5-C6 double bond in target uridines. The protein is tRNA-dihydrouridine synthase B of Pectobacterium carotovorum (Erwinia carotovora).